A 176-amino-acid chain; its full sequence is Tubulin polymerization-promoting protein family member 3 (176 aa).

The disordered stretch occupies residues 132 to 151 (TGSHKERFDQTGKGKGKSGR). The segment covering 134 to 151 (SHKERFDQTGKGKGKSGR) has biased composition (basic and acidic residues).

It belongs to the TPPP family.

The protein localises to the cytoplasm. It is found in the cytoskeleton. Regulator of microtubule dynamic that has microtubule bundling activity. The chain is Tubulin polymerization-promoting protein family member 3 (tppp3) from Xenopus laevis (African clawed frog).